The following is a 412-amino-acid chain: G-protein coupled receptor homolog UL33 (412 aa).

Topologically, residues 1–35 (MDTIIHNTTNRSTDTPHVNITCNITEPLSAIRTTE) are virion surface. Asn-7, Asn-19, and Asn-23 each carry an N-linked (GlcNAc...) asparagine; by host glycan. A helical transmembrane segment spans residues 36-56 (AVINTFIIFVGGPLNAIVLIT). The Intravirion portion of the chain corresponds to 57 to 80 (QLLTNRVLGYSTPTIYMTNLYSTN). Residues 81-101 (FLTLTVLPFIVLSNQWLLPAS) traverse the membrane as a helical segment. The Virion surface portion of the chain corresponds to 102-106 (VASCK). The cysteines at positions 105 and 188 are disulfide-linked. Residues 107–127 (FLSVIYYSSCTVGFATVALIA) traverse the membrane as a helical segment. At 128-147 (ADRYRVLHKRTYARQSYRST) the chain is on the intravirion side. The helical transmembrane segment at 148–168 (YIILLLTWFAGLIFSMPAAVY) threads the bilayer. The Virion surface portion of the chain corresponds to 169–206 (TTVVIHNGTNGQSSNGHATCVLYFIADEVYTVLLSWKV). A helical membrane pass occupies residues 207-227 (LLTLVWGAAPVIMMTWFYAFF). Over 228 to 244 (YSTVQRASQKQRSRTLT) the chain is Intravirion. A helical membrane pass occupies residues 245 to 265 (FVSVLLISFVALQTPYVSIMI). Residues 266–292 (FNSYATAAWPMDCEHLTLRRTIGTLSR) lie on the Virion surface side of the membrane. Residues 293–313 (LVPHLHCLINPILYALLGHDF) form a helical membrane-spanning segment. At 314 to 412 (LQRMRQCFRG…SQSHHNLSGV (99 aa)) the chain is on the intravirion side. Residues 377 to 412 (NFPSGTWKGGQKTASNDTSTKIPHRLSQSHHNLSGV) are disordered. Polar residues predominate over residues 388 to 397 (KTASNDTSTK).

It belongs to the G-protein coupled receptor 1 family. As to quaternary structure, heterodimerizes with US28.

The protein localises to the virion. Its subcellular location is the host cell membrane. The protein resides in the host cytoplasm. In terms of biological role, G-protein-coupled receptor (vGPCR) that constitutively activates multiple oncogenic signaling pathways including STAT3, AP-1, phospholipase C, NF-kappa-B or cAMP-responsive element (CRE) pathways. Plays an important role in viral reactivation from latency through activation of host CREB1, facilitating its recruitment to the viral major immediate early (MIE) genes. In turn, expression of the MIE-driven genes such as UL123 are de-repressed. Also facilitates virus dissemination via the extracellular and cell-to-cell route. This Human cytomegalovirus (strain Merlin) (HHV-5) protein is G-protein coupled receptor homolog UL33 (UL33).